The primary structure comprises 594 residues: DNA mismatch repair protein MutL (594 aa).

It belongs to the DNA mismatch repair MutL/HexB family.

Functionally, this protein is involved in the repair of mismatches in DNA. It is required for dam-dependent methyl-directed DNA mismatch repair. May act as a 'molecular matchmaker', a protein that promotes the formation of a stable complex between two or more DNA-binding proteins in an ATP-dependent manner without itself being part of a final effector complex. This Rhizorhabdus wittichii (strain DSM 6014 / CCUG 31198 / JCM 15750 / NBRC 105917 / EY 4224 / RW1) (Sphingomonas wittichii) protein is DNA mismatch repair protein MutL.